Consider the following 995-residue polypeptide: DExH-box ATP-dependent RNA helicase DExH1 (995 aa).

2 disordered regions span residues 1–42 and 156–192; these read MPPH…EQRW and KTTQ…ASKL. Gly residues predominate over residues 25–37; sequence RGGGGRGGGGGGR. Over residues 161–170 the composition is skewed to low complexity; the sequence is SGSSGASASA. Over residues 171 to 181 the composition is skewed to polar residues; it reads FNDQQDRTSTL. The Helicase ATP-binding domain occupies 238–405; sequence LNSVSQNQVL…FGNSPTMHIP (168 aa). Residue 251 to 258 coordinates ATP; that stretch reads GETGCGKT. The DEIH box signature appears at 352 to 355; sequence DEIH. Residues 429-450 are disordered; the sequence is SSDSGNYQGSSRGRRRESESKK. In terms of domain architecture, Helicase C-terminal spans 484-663; it reads QIDVDLVEAT…ELCLHIKSLQ (180 aa).

This sequence belongs to the DExH box helicase family.

The catalysed reaction is ATP + H2O = ADP + phosphate + H(+). The protein is DExH-box ATP-dependent RNA helicase DExH1 of Arabidopsis thaliana (Mouse-ear cress).